Reading from the N-terminus, the 309-residue chain is Protein FdhE (309 aa).

It belongs to the FdhE family.

It is found in the cytoplasm. Functionally, necessary for formate dehydrogenase activity. The chain is Protein FdhE from Shigella boydii serotype 18 (strain CDC 3083-94 / BS512).